An 89-amino-acid polypeptide reads, in one-letter code: Small ribosomal subunit protein uS14A (89 aa).

Belongs to the universal ribosomal protein uS14 family. As to quaternary structure, part of the 30S ribosomal subunit. Contacts proteins S3 and S10.

Functionally, binds 16S rRNA, required for the assembly of 30S particles and may also be responsible for determining the conformation of the 16S rRNA at the A site. In Staphylococcus haemolyticus (strain JCSC1435), this protein is Small ribosomal subunit protein uS14A.